Reading from the N-terminus, the 258-residue chain is uncharacterized protein (258 aa).

An N-terminal signal peptide occupies residues 1 to 19 (MVGILPLCCSGCVPSLCCS). Helical transmembrane passes span 94–114 (GLLL…NWTG), 197–217 (CLIL…LPYI), and 219–239 (PGLS…SSLV).

The protein localises to the membrane. This is an uncharacterized protein from Homo sapiens (Human).